The chain runs to 786 residues: Probable aminopeptidase 1 (786 aa).

Residues Glu103 and 235-239 (GAMEN) contribute to the substrate site. His270 lines the Zn(2+) pocket. Glu271 functions as the Proton acceptor in the catalytic mechanism. Zn(2+) is bound by residues His274 and Glu293.

Belongs to the peptidase M1 family. The cofactor is Zn(2+).

The protein localises to the cytoplasm. The sequence is that of Probable aminopeptidase 1 (ape1) from Sulfurisphaera tokodaii (strain DSM 16993 / JCM 10545 / NBRC 100140 / 7) (Sulfolobus tokodaii).